The chain runs to 65 residues: Large ribosomal subunit protein bL35 (65 aa).

The protein belongs to the bacterial ribosomal protein bL35 family.

This Xanthomonas campestris pv. campestris (strain ATCC 33913 / DSM 3586 / NCPPB 528 / LMG 568 / P 25) protein is Large ribosomal subunit protein bL35.